The sequence spans 210 residues: Glutathione S-transferase P (210 aa).

One can recognise a GST N-terminal domain in the interval 2–81 (PPYTVVYFPV…HLGRTLGLYG (80 aa)). Phosphotyrosine; by EGFR is present on tyrosine 4. Glutathione contacts are provided by residues tyrosine 8, arginine 14, tryptophan 39, lysine 45, and 52–53 (QL). A Phosphothreonine modification is found at threonine 62. Residue 65 to 66 (QS) coordinates glutathione. Residues 83 to 204 (DQREAALVDM…ASPEHVNLPI (122 aa)) form the GST C-terminal domain. 2 positions are modified to N6-succinyllysine: lysine 103 and lysine 116. Position 128 is an N6-acetyllysine (lysine 128).

It belongs to the GST superfamily. Pi family. As to quaternary structure, homodimer. Interacts with CDK5.

It is found in the cytoplasm. The protein resides in the mitochondrion. The protein localises to the nucleus. It catalyses the reaction RX + glutathione = an S-substituted glutathione + a halide anion + H(+). The enzyme catalyses prostaglandin J2 + glutathione = prostaglandin J2-S-(R)-glutathione. It carries out the reaction prostaglandin J2 + glutathione = prostaglandin J2-S-(S)-glutathione. The catalysed reaction is prostaglandin A2 + glutathione = prostaglandin A2-S-(S)-glutathione. It catalyses the reaction 11(S)-hydroxy-14(S),15(S)-epoxy-(5Z,8Z,12E)-eicosatrienoate + glutathione = (11S,15S)-dihydroxy-14(R)-S-glutathionyl-(5Z,8Z,12E)-eicosatrienoate. Its function is as follows. Conjugation of reduced glutathione to a wide number of exogenous and endogenous hydrophobic electrophiles. Involved in the formation of glutathione conjugates of both prostaglandin A2 (PGA2) and prostaglandin J2 (PGJ2). Participates in the formation of novel hepoxilin regioisomers. Negatively regulates CDK5 activity via p25/p35 translocation to prevent neurodegeneration. This chain is Glutathione S-transferase P (GSTP1), found in Pongo abelii (Sumatran orangutan).